The following is a 419-amino-acid chain: DNA ligase (419 aa).

Residues 1 to 120 (MLNHFPGHCS…ARQKRGAHTN (120 aa)) are NTD. The tract at residues 121 to 317 (RGMIPPMLVK…NYHSAHLAKL (197 aa)) is AD domain. Lys151 serves as the catalytic N6-AMP-lysine intermediate. Residues Lys151, Glu203, and Phe232 each coordinate ATP. Residue Glu203 participates in a divalent metal cation binding. Glu291 is an a divalent metal cation binding site. ATP is bound by residues Ile294 and Lys316. Residues 318-419 (KPLLDAEFIL…REPINVLEII (102 aa)) are OB domain.

The protein belongs to the ATP-dependent DNA ligase family.

The protein resides in the virion. It carries out the reaction ATP + (deoxyribonucleotide)n-3'-hydroxyl + 5'-phospho-(deoxyribonucleotide)m = (deoxyribonucleotide)n+m + AMP + diphosphate.. Functionally, very low-fidelity DNA ligase that seals nicks in double-stranded DNA during DNA repair. Together with the viral repair DNA polymerase X, fills the single nucleotide gaps generated by the AP endonuclease. It is not essential for viral replication and recombination. Displays a very low adenylation activity towards DNA with 3'-dideoxy- or 3'-amino-terminated nicks compared to regular nick DNA. The chain is DNA ligase from African swine fever virus (isolate Tick/South Africa/Pretoriuskop Pr4/1996) (ASFV).